Reading from the N-terminus, the 169-residue chain is Probable phospholipid hydroperoxide glutathione peroxidase (169 aa).

Residue cysteine 43 is part of the active site.

This sequence belongs to the glutathione peroxidase family.

The protein resides in the cytoplasm. The enzyme catalyses a hydroperoxy polyunsaturated fatty acid + 2 glutathione = a hydroxy polyunsaturated fatty acid + glutathione disulfide + H2O. Protects cells and enzymes from oxidative damage, by catalyzing the reduction of hydrogen peroxide, lipid peroxides and organic hydroperoxide, by glutathione. This is Probable phospholipid hydroperoxide glutathione peroxidase from Nicotiana tabacum (Common tobacco).